A 209-amino-acid chain; its full sequence is Large ribosomal subunit protein uL3 (209 aa).

The residue at position 150 (Q150) is an N5-methylglutamine.

Belongs to the universal ribosomal protein uL3 family. Part of the 50S ribosomal subunit. Forms a cluster with proteins L14 and L19. Post-translationally, methylated by PrmB.

One of the primary rRNA binding proteins, it binds directly near the 3'-end of the 23S rRNA, where it nucleates assembly of the 50S subunit. This is Large ribosomal subunit protein uL3 from Pasteurella multocida (strain Pm70).